A 485-amino-acid chain; its full sequence is Putative phosphoethanolamine transferase HI_1064 (485 aa).

4 consecutive transmembrane segments (helical) span residues 33–53 (ILPA…ILIG), 55–75 (GMFT…ILLL), 81–101 (SFYF…PTGL), and 125–145 (FLLQ…ILIF).

This sequence belongs to the phosphoethanolamine transferase family.

The protein localises to the cell membrane. This Haemophilus influenzae (strain ATCC 51907 / DSM 11121 / KW20 / Rd) protein is Putative phosphoethanolamine transferase HI_1064.